We begin with the raw amino-acid sequence, 119 residues long: Large ribosomal subunit protein uL22c (119 aa).

It belongs to the universal ribosomal protein uL22 family. In terms of assembly, part of the 50S ribosomal subunit.

Its subcellular location is the plastid. The protein localises to the chloroplast. Functionally, this protein binds specifically to 23S rRNA. The globular domain of the protein is located near the polypeptide exit tunnel on the outside of the subunit, while an extended beta-hairpin is found that lines the wall of the exit tunnel in the center of the 70S ribosome. This Angiopteris evecta (Mule's foot fern) protein is Large ribosomal subunit protein uL22c (rpl22).